The following is a 222-amino-acid chain: Protein-L-isoaspartate O-methyltransferase (222 aa).

Serine 69 is an active-site residue.

Belongs to the methyltransferase superfamily. L-isoaspartyl/D-aspartyl protein methyltransferase family.

The protein resides in the cytoplasm. The enzyme catalyses [protein]-L-isoaspartate + S-adenosyl-L-methionine = [protein]-L-isoaspartate alpha-methyl ester + S-adenosyl-L-homocysteine. Its function is as follows. Catalyzes the methyl esterification of L-isoaspartyl residues in peptides and proteins that result from spontaneous decomposition of normal L-aspartyl and L-asparaginyl residues. It plays a role in the repair and/or degradation of damaged proteins. This chain is Protein-L-isoaspartate O-methyltransferase, found in Nitrosomonas europaea (strain ATCC 19718 / CIP 103999 / KCTC 2705 / NBRC 14298).